The primary structure comprises 178 residues: Ribosome maturation factor RimM (178 aa).

The 74-residue stretch at serine 104 to leucine 177 folds into the PRC barrel domain.

Belongs to the RimM family. In terms of assembly, binds ribosomal protein uS19.

The protein localises to the cytoplasm. Its function is as follows. An accessory protein needed during the final step in the assembly of 30S ribosomal subunit, possibly for assembly of the head region. Essential for efficient processing of 16S rRNA. May be needed both before and after RbfA during the maturation of 16S rRNA. It has affinity for free ribosomal 30S subunits but not for 70S ribosomes. This Thermosipho melanesiensis (strain DSM 12029 / CIP 104789 / BI429) protein is Ribosome maturation factor RimM.